A 479-amino-acid chain; its full sequence is Probable acyl-CoA desaturase (479 aa).

Residues 1 to 18 (MTAPSATAFSSATTQPTT) are compositionally biased toward low complexity. The segment at 1-28 (MTAPSATAFSSATTQPTTEGNASMRKRT) is disordered. The Cytoplasmic portion of the chain corresponds to 1–61 (MTAPSATAFS…PWTMQNWWRH (61 aa)). A helical transmembrane segment spans residues 62 to 82 (LNWLHCMLIFGLPMIAIYGVF). Topologically, residues 83 to 89 (TTPLQTK) are lumenal. A helical transmembrane segment spans residues 90–110 (TLIFAIIYYAYSGLGITAGYH). 5 residues coordinate Fe cation: His110, His115, His147, His150, and His151. Positions 110–115 (HRLWSH) match the Histidine box-1 motif. Topologically, residues 111 to 204 (RLWSHRAYKA…DPFVMFNHRH (94 aa)) are cytoplasmic. Positions 147–151 (HRAHH) match the Histidine box-2 motif. Residues 205–225 (FLPIASFMAFIFPSLFCGLLW) traverse the membrane as a helical segment. The Lumenal segment spans residues 226–229 (GDYR). The helical transmembrane segment at 230–250 (GGYFYAGVCRLVFVHHATFCV) threads the bilayer. Residues 251–479 (NSLAHLIGSQ…QPPIEAAAAN (229 aa)) lie on the Cytoplasmic side of the membrane. Positions 255, 284, 287, and 288 each coordinate Fe cation. The short motif at 284 to 288 (HNYHH) is the Histidine box-3 element. One can recognise a Cytochrome b5 heme-binding domain in the interval 357–433 (QLPVMEFEDF…LSTYRVAVVR (77 aa)). His390 and His416 together coordinate heme.

Belongs to the fatty acid desaturase type 1 family. It depends on Fe(2+) as a cofactor.

Its subcellular location is the membrane. The catalysed reaction is octadecanoyl-CoA + 2 Fe(II)-[cytochrome b5] + O2 + 2 H(+) = (9Z)-octadecenoyl-CoA + 2 Fe(III)-[cytochrome b5] + 2 H2O. Functionally, stearoyl-CoA desaturase that utilizes O(2) and electrons from reduced cytochrome b5 to introduce the first double bond into saturated fatty acyl-CoA substrates. Catalyzes the insertion of a cis double bond at the delta-9 position into fatty acyl-CoA substrates including palmitoyl-CoA and stearoyl-CoA. Contributes to the biosynthesis of membrane phospholipids, cholesterol esters and triglycerides. The protein is Probable acyl-CoA desaturase of Schizosaccharomyces pombe (strain 972 / ATCC 24843) (Fission yeast).